Here is a 270-residue protein sequence, read N- to C-terminus: A-type potassium channel modulatory protein KCNIP2 (270 aa).

Residues 1 to 17 (MRGQGRKESLSDSRDLD) are compositionally biased toward basic and acidic residues. Residues 1–32 (MRGQGRKESLSDSRDLDGSYDQLTGHPPGPTK) form a disordered region. A Phosphoserine modification is found at Ser-9. 2 S-palmitoyl cysteine lipidation sites follow: Cys-45 and Cys-46. The EF-hand 1; degenerate domain occupies 81-137 (FELSTVCHRPEGLEQLQEQTKFTRKELQVLYRGFKNECPSGIVNEENFKQIYSQFFP). 3 consecutive EF-hand domains span residues 140 to 175 (DSSTYATFLFNAFDTNHDGSVSFEDFVAGLSVILRG), 176 to 211 (TVDDRLNWAFNLYDLNKDGCITKEEMLDIMKSIYDM), and 224 to 259 (APREHVESFFQKMDRNKDGVVTIEEFIESCQKDENI). Positions 153, 155, 157, 159, 164, 189, 191, 193, 195, 200, 237, 239, 241, and 248 each coordinate Ca(2+). The interaction with KCND2 stretch occupies residues 257–270 (ENIMRSMQLFDNVI).

This sequence belongs to the recoverin family. In terms of assembly, component of heteromultimeric potassium channels. Identified in potassium channel complexes containing KCND1, KCND2, KCND3, KCNIP1, KCNIP2, KCNIP3, KCNIP4, DPP6 and DPP10. The KCND2-KCNIP2 channel complex contains four KCND2 and four KCNIP2 subunits. Interacts with KCND2. Probably part of a complex consisting of KCNIP1, KCNIP2 isoform 3 and KCND2. At least isoform 2 and isoform 3 can self-associate to form homodimers and homotetramers. Isoform 3 interacts with KCNIP1 in a calcium-dependent manner. Interacts with KCND3; each KCNIP2 monomer interacts with two adjacent KCND3 subunits, through both the N-terminal inactivation ball of a KCND3 subunit and a C-terminal helix from the adjacent KCND3 subunit, clamping them together; this interaction modulates the channel gating kinetics. Post-translationally, palmitoylated. Palmitoylation enhances association with the plasma membrane. In terms of tissue distribution, expressed in brain. Colocalizes with KCND2 in excitatory neurons including cortical and hippocampal CA1 pyramidal cells. Isoform 3 is expressed in heart and in umbilical vein endothelial cells. Not expressed in fetal heart.

The protein resides in the cell membrane. Regulatory subunit of Kv4/D (Shal)-type voltage-gated rapidly inactivating A-type potassium channels. Modulates channel density, inactivation kinetics and rate of recovery from inactivation in a calcium-dependent and isoform-specific manner. Involved in KCND2 and KCND3 trafficking to the cell surface. May be required for the expression of I(To) currents in the heart. The sequence is that of A-type potassium channel modulatory protein KCNIP2 from Homo sapiens (Human).